The sequence spans 129 residues: NADPH-dependent 7-cyano-7-deazaguanine reductase (129 aa).

The active-site Thioimide intermediate is the Cys34. Asp41 functions as the Proton donor in the catalytic mechanism. Substrate contacts are provided by residues 56–58 (VEL) and 75–76 (HE).

Belongs to the GTP cyclohydrolase I family. QueF type 1 subfamily.

Its subcellular location is the cytoplasm. It carries out the reaction 7-aminomethyl-7-carbaguanine + 2 NADP(+) = 7-cyano-7-deazaguanine + 2 NADPH + 3 H(+). It functions in the pathway tRNA modification; tRNA-queuosine biosynthesis. In terms of biological role, catalyzes the NADPH-dependent reduction of 7-cyano-7-deazaguanine (preQ0) to 7-aminomethyl-7-deazaguanine (preQ1). In Nitrosococcus oceani (strain ATCC 19707 / BCRC 17464 / JCM 30415 / NCIMB 11848 / C-107), this protein is NADPH-dependent 7-cyano-7-deazaguanine reductase.